The chain runs to 175 residues: Methylated-DNA--protein-cysteine methyltransferase (175 aa).

Cysteine 142 functions as the Nucleophile; methyl group acceptor in the catalytic mechanism.

This sequence belongs to the MGMT family.

The protein resides in the cytoplasm. It catalyses the reaction a 6-O-methyl-2'-deoxyguanosine in DNA + L-cysteinyl-[protein] = S-methyl-L-cysteinyl-[protein] + a 2'-deoxyguanosine in DNA. The catalysed reaction is a 4-O-methyl-thymidine in DNA + L-cysteinyl-[protein] = a thymidine in DNA + S-methyl-L-cysteinyl-[protein]. Involved in the cellular defense against the biological effects of O6-methylguanine (O6-MeG) and O4-methylthymine (O4-MeT) in DNA. Repairs the methylated nucleobase in DNA by stoichiometrically transferring the methyl group to a cysteine residue in the enzyme. This is a suicide reaction: the enzyme is irreversibly inactivated. This Thermococcus barophilus (strain DSM 11836 / MP) protein is Methylated-DNA--protein-cysteine methyltransferase.